Consider the following 545-residue polypeptide: Acetamidase (545 aa).

Active-site charge relay system residues include lysine 130 and serine 205. The active-site Acyl-ester intermediate is serine 229.

This sequence belongs to the amidase family.

The enzyme catalyses a monocarboxylic acid amide + H2O = a monocarboxylate + NH4(+). It catalyses the reaction acetamide + H2O = acetate + NH4(+). In terms of biological role, allows acetamide to be used as a sole carbon or nitrogen source. This Aspergillus oryzae (strain ATCC 42149 / RIB 40) (Yellow koji mold) protein is Acetamidase (amdS).